The sequence spans 110 residues: UPF0060 membrane protein ASA_2267 (110 aa).

4 helical membrane passes run 7 to 27, 33 to 53, 63 to 83, and 87 to 107; these read IGLFLITAVAEIVGCYLPYLW, SVWLLLPAGLSLVLFAWLLSL, AAYGGVYIFVAILWLWLVDGI, and LWDLVGSLVALFGMAIIMFAP.

Belongs to the UPF0060 family.

The protein resides in the cell inner membrane. This Aeromonas salmonicida (strain A449) protein is UPF0060 membrane protein ASA_2267.